The primary structure comprises 465 residues: tRNA modification GTPase MnmE (465 aa).

3 residues coordinate (6S)-5-formyl-5,6,7,8-tetrahydrofolate: Arg25, Glu87, and Arg126. Residues 222–386 (TIRVVLRGLP…LIERLVQFAE (165 aa)) enclose the TrmE-type G domain. GTP contacts are provided by residues 232 to 237 (NAGKSR), 251 to 257 (TDQAGTT), and 276 to 279 (DTAG). Ser236 and Thr257 together coordinate Mg(2+). Residue Lys465 coordinates (6S)-5-formyl-5,6,7,8-tetrahydrofolate.

It belongs to the TRAFAC class TrmE-Era-EngA-EngB-Septin-like GTPase superfamily. TrmE GTPase family. As to quaternary structure, homodimer. Heterotetramer of two MnmE and two MnmG subunits. K(+) serves as cofactor.

The protein resides in the cytoplasm. Functionally, exhibits a very high intrinsic GTPase hydrolysis rate. Involved in the addition of a carboxymethylaminomethyl (cmnm) group at the wobble position (U34) of certain tRNAs, forming tRNA-cmnm(5)s(2)U34. This chain is tRNA modification GTPase MnmE, found in Rhodopirellula baltica (strain DSM 10527 / NCIMB 13988 / SH1).